The sequence spans 379 residues: Putative glutamate--cysteine ligase 2 (379 aa).

The protein belongs to the glutamate--cysteine ligase type 2 family. YbdK subfamily.

The catalysed reaction is L-cysteine + L-glutamate + ATP = gamma-L-glutamyl-L-cysteine + ADP + phosphate + H(+). Functionally, ATP-dependent carboxylate-amine ligase which exhibits weak glutamate--cysteine ligase activity. This is Putative glutamate--cysteine ligase 2 from Roseiflexus sp. (strain RS-1).